A 538-amino-acid chain; its full sequence is Cytochrome P450 monooxygenase okaG (538 aa).

A helical membrane pass occupies residues 3–23 (LISPLAAVLSAMAIVLGLLFF). C484 is a heme binding site.

It belongs to the cytochrome P450 family. Heme serves as cofactor.

It localises to the membrane. It catalyses the reaction 12-deshydroxyl okaramine E + 2 reduced [NADPH--hemoprotein reductase] + 2 O2 = 3-desmethyl okaramine B + 2 oxidized [NADPH--hemoprotein reductase] + 2 H2O + 2 H(+). Its pathway is alkaloid biosynthesis. Functionally, nonribosomal peptide synthetase; part of the gene cluster that mediates the biosynthesis of okaramine B, a prenylated indole alkaloid that possesses an unusual octacyclic ring system, including a four-membered azetidine ring and an eight-membered azocine ring, and that exhibits insecticidal activity against silkworm larvae. Within the pathway, okaG acts as a 2,3-diol synthase that installs 2,3-diol on the okaramine scaffold to convert 12-deshydroxyl okaramine E into 3-desmethyl okaramine B. OkaG is also able to produce use okaramine E and produce okaramine D with the help of the methyltransferase okaF. The biosynthesis begins with the NRPS okaA that condenses two tryptophan molecules into cyclo(L-Trp-L-Trp). Prenylation by the prenyltransferase okaC then leads to the formation of cyclo(N8-(alpha,alpha-dimethylallyl)-L-Trp-6a-(alpha,alpha-dime-thylallyl)-L-Trp). This is followed by indole 2,3-epoxidation by the FAD-dependent monooxygenase okaB to facilitate the formation of the hexahydropyrrolo[2,3-b]indole (HPI) moiety of okaramine C. The cytochrome P450 monooxygenase okaD then likely catalyzes formation of the eight-membered ring of okaramine A. The dioxygenase okaE further forms the unusual 2-dimethyl-3-methyl-azetidine ring to yield 12-deshydroxyl okaramine E, as well as the hydroxylation of 12-deshydroxyl okaramine E to produce okaramine E. The cytochrome P450 monoxygenase okaG converts 12-deshydroxyl okaramine E into 3-desmethyl okaramine B which is further methylated by the methyltransferase okaF into okaramine B. In a shunt pathway, okaG and okaF together are also able to convert okaramine E into okaramine D. Okaramine H is produced by nonenzymatic conversion from okaramine A. The polypeptide is Cytochrome P450 monooxygenase okaG (Penicillium ochrochloron).